Here is a 162-residue protein sequence, read N- to C-terminus: Crossover junction endodeoxyribonuclease RuvC (162 aa).

Active-site residues include Asp7, Glu67, and Asp140. Mg(2+) is bound by residues Asp7, Glu67, and Asp140.

This sequence belongs to the RuvC family. Homodimer which binds Holliday junction (HJ) DNA. The HJ becomes 2-fold symmetrical on binding to RuvC with unstacked arms; it has a different conformation from HJ DNA in complex with RuvA. In the full resolvosome a probable DNA-RuvA(4)-RuvB(12)-RuvC(2) complex forms which resolves the HJ. The cofactor is Mg(2+).

The protein localises to the cytoplasm. The enzyme catalyses Endonucleolytic cleavage at a junction such as a reciprocal single-stranded crossover between two homologous DNA duplexes (Holliday junction).. Its function is as follows. The RuvA-RuvB-RuvC complex processes Holliday junction (HJ) DNA during genetic recombination and DNA repair. Endonuclease that resolves HJ intermediates. Cleaves cruciform DNA by making single-stranded nicks across the HJ at symmetrical positions within the homologous arms, yielding a 5'-phosphate and a 3'-hydroxyl group; requires a central core of homology in the junction. The consensus cleavage sequence is 5'-(A/T)TT(C/G)-3'. Cleavage occurs on the 3'-side of the TT dinucleotide at the point of strand exchange. HJ branch migration catalyzed by RuvA-RuvB allows RuvC to scan DNA until it finds its consensus sequence, where it cleaves and resolves the cruciform DNA. The protein is Crossover junction endodeoxyribonuclease RuvC of Wolinella succinogenes (strain ATCC 29543 / DSM 1740 / CCUG 13145 / JCM 31913 / LMG 7466 / NCTC 11488 / FDC 602W) (Vibrio succinogenes).